We begin with the raw amino-acid sequence, 459 residues long: Cysteine--tRNA ligase (459 aa).

Residue C29 participates in Zn(2+) binding. Residues 31-41 (MTVYDLCHLGH) carry the 'HIGH' region motif. Zn(2+) contacts are provided by C213, H238, and E242. The 'KMSKS' region motif lies at 270 to 274 (KMSKS). K273 contacts ATP.

Belongs to the class-I aminoacyl-tRNA synthetase family. As to quaternary structure, monomer. It depends on Zn(2+) as a cofactor.

It is found in the cytoplasm. The catalysed reaction is tRNA(Cys) + L-cysteine + ATP = L-cysteinyl-tRNA(Cys) + AMP + diphosphate. This Variovorax paradoxus (strain S110) protein is Cysteine--tRNA ligase.